A 562-amino-acid polypeptide reads, in one-letter code: MPQSQRPLYIPYAGPSLLETPLLNKGSAFSKEERGSFNLTGLLPPRFESIDEQAERAFRQYSCFQTNINKHIYLRAIHDNNETLFFKLVQNNLAEMMPIIYTPTVGDACEQFSDIYRSSRGLFISYEDRFNIDDMLRNATKNKVKVIVVTDGERILGLGDQGIGGMGIPIGKLSLYTACGGISPAHTLPVMLDVGTNNQKLLDDPMYMGARHKRIDQDSYDEFLELFISAVKRRWPNVLLQFEDFAQPNAMPLLQRYKDRICCFNDDIQGTASVTVGTLLAACRSKGSKLSELNVAFVGAGSAGCGIAEQIISQMMNEGLGAEQARSQVFMVDRFGLLTQGMGELRDFQQKLVQSNEAIAEWDIAGEFASLVEVMHGAKPDILIGVSGQAGLFTEKVITAMKSHCEMPIIFPLSNPSRQVEATPSQVINWTQGQVIIATGSPFDPIEYQGKTFPIAQCNNSYIFPGVGLAVVAANISRITDGMLQVASETLAAASPLANGESDELLPPLTSIAQLSRDIAFAIAKVAYKQGLALELTDDELLAKIEHNFWKPEYRQYRRTSL.

The active-site Proton donor is tyrosine 101. An NAD(+)-binding site is contributed by arginine 154. The active-site Proton acceptor is the lysine 172. A divalent metal cation is bound by residues glutamate 243, aspartate 244, and aspartate 267. Aspartate 267 and asparagine 415 together coordinate NAD(+).

Belongs to the malic enzymes family. In terms of assembly, homotetramer. Requires Mg(2+) as cofactor. Mn(2+) serves as cofactor.

It catalyses the reaction (S)-malate + NAD(+) = pyruvate + CO2 + NADH. The catalysed reaction is oxaloacetate + H(+) = pyruvate + CO2. The sequence is that of NAD-dependent malic enzyme from Colwellia psychrerythraea (strain 34H / ATCC BAA-681) (Vibrio psychroerythus).